A 210-amino-acid polypeptide reads, in one-letter code: DNA-directed RNA polymerase III subunit rpc31 (210 aa).

S103 bears the Phosphoserine mark. The disordered stretch occupies residues 151–210; sequence KDESSEAAHPNIEEEPDEGLEEEDEDFGDDDDNDYGENYFDNGEGDDYDDYDGDEGAIYE. 2 stretches are compositionally biased toward acidic residues: residues 163–185 and 193–210; these read EEEPDEGLEEEDEDFGDDDDNDY and GEGDDYDDYDGDEGAIYE.

The protein belongs to the eukaryotic RPC7 RNA polymerase subunit family. As to quaternary structure, component of the RNA polymerase III (Pol III) complex.

Its subcellular location is the cytoplasm. The protein resides in the nucleus. Functionally, DNA-dependent RNA polymerase catalyzes the transcription of DNA into RNA using the four ribonucleoside triphosphates as substrates. Specific peripheric component of RNA polymerase III which synthesizes small RNAs, such as 5S rRNA and tRNAs. This Schizosaccharomyces pombe (strain 972 / ATCC 24843) (Fission yeast) protein is DNA-directed RNA polymerase III subunit rpc31 (rpc31).